The following is a 220-amino-acid chain: Large ribosomal subunit protein uL10c (220 aa).

The transit peptide at 1–41 (MEVALLSFSSSLSPLCHQRISTLTPKTSNSPNYPRLPVIRS) directs the protein to the chloroplast.

Belongs to the universal ribosomal protein uL10 family. Part of the 50S ribosomal subunit.

It localises to the plastid. The protein resides in the chloroplast. Functionally, this protein binds directly to 23S ribosomal RNA. The chain is Large ribosomal subunit protein uL10c (RPL10) from Arabidopsis thaliana (Mouse-ear cress).